Here is a 1430-residue protein sequence, read N- to C-terminus: DNA-directed RNA polymerase subunit beta' (1430 aa).

Residues C70, C72, C85, and C88 each contribute to the Zn(2+) site. The Mg(2+) site is built by D495, D497, and D499. Residues C838, C912, C919, and C922 each coordinate Zn(2+).

It belongs to the RNA polymerase beta' chain family. In terms of assembly, the RNAP catalytic core consists of 2 alpha, 1 beta, 1 beta' and 1 omega subunit. When a sigma factor is associated with the core the holoenzyme is formed, which can initiate transcription. Mg(2+) serves as cofactor. It depends on Zn(2+) as a cofactor.

It carries out the reaction RNA(n) + a ribonucleoside 5'-triphosphate = RNA(n+1) + diphosphate. Functionally, DNA-dependent RNA polymerase catalyzes the transcription of DNA into RNA using the four ribonucleoside triphosphates as substrates. This chain is DNA-directed RNA polymerase subunit beta', found in Rhodospirillum centenum (strain ATCC 51521 / SW).